The chain runs to 194 residues: UPF0301 protein BT_0659 (194 aa).

Belongs to the UPF0301 (AlgH) family.

The sequence is that of UPF0301 protein BT_0659 from Bartonella tribocorum (strain CIP 105476 / IBS 506).